Reading from the N-terminus, the 417-residue chain is Serine protease hepsin (417 aa).

At 1-23 (MAQKEGGRTVPCCSRPKVAALTA) the chain is on the cytoplasmic side. The helical; Signal-anchor for type II membrane protein transmembrane segment at 24 to 44 (GTLLLLTAIGAASWAIVAVLL) threads the bilayer. Residues 45–417 (RSDQEPLYPV…SEASGMVTQL (373 aa)) are Extracellular-facing. An SRCR domain is found at 54–151 (VQVSSADARL…RGRFLAAICQ (98 aa)). 8 disulfide bridges follow: Cys77–Cys140, Cys90–Cys150, Cys119–Cys138, Cys153–Cys277, Cys188–Cys204, Cys291–Cys359, Cys322–Cys338, and Cys349–Cys381. Residue Asn112 is glycosylated (N-linked (GlcNAc...) asparagine). A Peptidase S1 domain is found at 163–405 (IVGGRDTSLG…FREWIFQAIK (243 aa)). Residues His203 and Asp257 each act as charge relay system in the active site. The active-site Charge relay system is the Ser353.

The protein belongs to the peptidase S1 family. In terms of tissue distribution, detected in liver and kidney.

The protein resides in the cell membrane. The protein localises to the apical cell membrane. It catalyses the reaction Cleavage after basic amino-acid residues, with Arg strongly preferred to Lys.. Functionally, serine protease that cleaves extracellular substrates, and contributes to the proteolytic processing of growth factors, such as HGF and MST1/HGFL. Plays a role in cell growth and maintenance of cell morphology. Plays a role in the proteolytic processing of ACE2. Mediates the proteolytic cleavage of urinary UMOD that is required for UMOD polymerization. This chain is Serine protease hepsin (HPN), found in Homo sapiens (Human).